A 90-amino-acid chain; its full sequence is Hypnin-A3 (90 aa).

Functionally, lectin specific for core(alpha 1-6)fucosylated N-glycans. Inhibits platelet aggregation. In Hypnea japonica (Japanese red alga), this protein is Hypnin-A3.